The primary structure comprises 112 residues: Cytochrome c 2.1 (112 aa).

Heme c-binding residues include C20, C23, H24, and M85.

This sequence belongs to the cytochrome c family. Post-translationally, binds 1 heme c group covalently per subunit.

It is found in the mitochondrion intermembrane space. Electron carrier protein. The oxidized form of the cytochrome c heme group can accept an electron from the heme group of the cytochrome c1 subunit of cytochrome reductase. Cytochrome c then transfers this electron to the cytochrome oxidase complex, the final protein carrier in the mitochondrial electron-transport chain. This is Cytochrome c 2.1 from Caenorhabditis briggsae.